Consider the following 272-residue polypeptide: Putative pyruvate, phosphate dikinase regulatory protein (272 aa).

151-158 lines the ADP pocket; it reads GISRTSKT.

It belongs to the pyruvate, phosphate/water dikinase regulatory protein family. PDRP subfamily.

The enzyme catalyses N(tele)-phospho-L-histidyl/L-threonyl-[pyruvate, phosphate dikinase] + ADP = N(tele)-phospho-L-histidyl/O-phospho-L-threonyl-[pyruvate, phosphate dikinase] + AMP + H(+). The catalysed reaction is N(tele)-phospho-L-histidyl/O-phospho-L-threonyl-[pyruvate, phosphate dikinase] + phosphate + H(+) = N(tele)-phospho-L-histidyl/L-threonyl-[pyruvate, phosphate dikinase] + diphosphate. Its function is as follows. Bifunctional serine/threonine kinase and phosphorylase involved in the regulation of the pyruvate, phosphate dikinase (PPDK) by catalyzing its phosphorylation/dephosphorylation. The protein is Putative pyruvate, phosphate dikinase regulatory protein of Staphylococcus aureus (strain Mu3 / ATCC 700698).